Consider the following 512-residue polypeptide: GMP synthase [glutamine-hydrolyzing] (512 aa).

The Glutamine amidotransferase type-1 domain occupies 7–197 (TIIVLDFGSQ…VFGVCGCSEG (191 aa)). Cys-84 (nucleophile) is an active-site residue. Residues His-171 and Glu-173 contribute to the active site. One can recognise a GMPS ATP-PPase domain in the interval 198–387 (WNMENFIEVE…LGIPDEIVWR (190 aa)). An ATP-binding site is contributed by 225-231 (SGGVDSS).

In terms of assembly, homodimer.

It catalyses the reaction XMP + L-glutamine + ATP + H2O = GMP + L-glutamate + AMP + diphosphate + 2 H(+). Its pathway is purine metabolism; GMP biosynthesis; GMP from XMP (L-Gln route): step 1/1. Its function is as follows. Catalyzes the synthesis of GMP from XMP. The sequence is that of GMP synthase [glutamine-hydrolyzing] from Bacillus cytotoxicus (strain DSM 22905 / CIP 110041 / 391-98 / NVH 391-98).